Here is a 391-residue protein sequence, read N- to C-terminus: Putative 8-amino-7-oxononanoate synthase (391 aa).

The substrate site is built by arginine 22 and histidine 135. Residues serine 183, 208–211 (DDAH), and 239–242 (TLSK) each bind pyridoxal 5'-phosphate. The residue at position 242 (lysine 242) is an N6-(pyridoxal phosphate)lysine. Threonine 358 provides a ligand contact to substrate.

This sequence belongs to the class-II pyridoxal-phosphate-dependent aminotransferase family. BioF subfamily. As to quaternary structure, homodimer. Pyridoxal 5'-phosphate serves as cofactor.

It carries out the reaction 6-carboxyhexanoyl-[ACP] + L-alanine + H(+) = (8S)-8-amino-7-oxononanoate + holo-[ACP] + CO2. It functions in the pathway cofactor biosynthesis; biotin biosynthesis. Its function is as follows. Catalyzes the decarboxylative condensation of pimeloyl-[acyl-carrier protein] and L-alanine to produce 8-amino-7-oxononanoate (AON), [acyl-carrier protein], and carbon dioxide. The polypeptide is Putative 8-amino-7-oxononanoate synthase (bioF) (Thermosynechococcus vestitus (strain NIES-2133 / IAM M-273 / BP-1)).